Consider the following 85-residue polypeptide: Small ribosomal subunit protein bS16 (85 aa).

This sequence belongs to the bacterial ribosomal protein bS16 family.

The chain is Small ribosomal subunit protein bS16 from Neorickettsia sennetsu (strain ATCC VR-367 / Miyayama) (Ehrlichia sennetsu).